A 569-amino-acid polypeptide reads, in one-letter code: Adenine deaminase (569 aa).

The protein belongs to the metallo-dependent hydrolases superfamily. Adenine deaminase family. Mn(2+) is required as a cofactor.

The enzyme catalyses adenine + H2O + H(+) = hypoxanthine + NH4(+). The chain is Adenine deaminase from Desulfatibacillum aliphaticivorans.